The chain runs to 493 residues: Protein nucleotidyltransferase YdiU (493 aa).

ATP contacts are provided by glycine 96, glycine 98, arginine 99, lysine 119, aspartate 131, glycine 132, arginine 182, and arginine 189. Residue aspartate 258 is the Proton acceptor of the active site. Positions 259 and 268 each coordinate Mg(2+). Residue aspartate 268 participates in ATP binding. Residues 471–493 (EKYTEFKNPPAPKERVSQTFCGT) form a disordered region.

It belongs to the SELO family. Requires Mg(2+) as cofactor. It depends on Mn(2+) as a cofactor.

It carries out the reaction L-seryl-[protein] + ATP = 3-O-(5'-adenylyl)-L-seryl-[protein] + diphosphate. The enzyme catalyses L-threonyl-[protein] + ATP = 3-O-(5'-adenylyl)-L-threonyl-[protein] + diphosphate. It catalyses the reaction L-tyrosyl-[protein] + ATP = O-(5'-adenylyl)-L-tyrosyl-[protein] + diphosphate. The catalysed reaction is L-histidyl-[protein] + UTP = N(tele)-(5'-uridylyl)-L-histidyl-[protein] + diphosphate. It carries out the reaction L-seryl-[protein] + UTP = O-(5'-uridylyl)-L-seryl-[protein] + diphosphate. The enzyme catalyses L-tyrosyl-[protein] + UTP = O-(5'-uridylyl)-L-tyrosyl-[protein] + diphosphate. Functionally, nucleotidyltransferase involved in the post-translational modification of proteins. It can catalyze the addition of adenosine monophosphate (AMP) or uridine monophosphate (UMP) to a protein, resulting in modifications known as AMPylation and UMPylation. This Nitrosococcus oceani (strain ATCC 19707 / BCRC 17464 / JCM 30415 / NCIMB 11848 / C-107) protein is Protein nucleotidyltransferase YdiU.